The sequence spans 126 residues: Holo-[acyl-carrier-protein] synthase (126 aa).

Residues D9 and E58 each coordinate Mg(2+).

This sequence belongs to the P-Pant transferase superfamily. AcpS family. Mg(2+) serves as cofactor.

Its subcellular location is the cytoplasm. It catalyses the reaction apo-[ACP] + CoA = holo-[ACP] + adenosine 3',5'-bisphosphate + H(+). In terms of biological role, transfers the 4'-phosphopantetheine moiety from coenzyme A to a Ser of acyl-carrier-protein. The chain is Holo-[acyl-carrier-protein] synthase from Photobacterium profundum (strain SS9).